The chain runs to 154 residues: 6,7-dimethyl-8-ribityllumazine synthase (154 aa).

5-amino-6-(D-ribitylamino)uracil is bound by residues Phe23, 57–59 (AFE), and 81–83 (AVI). (2S)-2-hydroxy-3-oxobutyl phosphate is bound at residue 86–87 (AT). The active-site Proton donor is His89. Phe114 contacts 5-amino-6-(D-ribitylamino)uracil. A (2S)-2-hydroxy-3-oxobutyl phosphate-binding site is contributed by Arg128.

It belongs to the DMRL synthase family.

It carries out the reaction (2S)-2-hydroxy-3-oxobutyl phosphate + 5-amino-6-(D-ribitylamino)uracil = 6,7-dimethyl-8-(1-D-ribityl)lumazine + phosphate + 2 H2O + H(+). Its pathway is cofactor biosynthesis; riboflavin biosynthesis; riboflavin from 2-hydroxy-3-oxobutyl phosphate and 5-amino-6-(D-ribitylamino)uracil: step 1/2. In terms of biological role, catalyzes the formation of 6,7-dimethyl-8-ribityllumazine by condensation of 5-amino-6-(D-ribitylamino)uracil with 3,4-dihydroxy-2-butanone 4-phosphate. This is the penultimate step in the biosynthesis of riboflavin. The chain is 6,7-dimethyl-8-ribityllumazine synthase from Syntrophus aciditrophicus (strain SB).